A 197-amino-acid chain; its full sequence is Small ribosomal subunit protein uS4c (197 aa).

Residues 82-143 enclose the S4 RNA-binding domain; that stretch reads MRLDNILFRL…KQRSKALIQN (62 aa).

It belongs to the universal ribosomal protein uS4 family. Part of the 30S ribosomal subunit. Contacts protein S5. The interaction surface between S4 and S5 is involved in control of translational fidelity.

The protein resides in the plastid. The protein localises to the chloroplast. In terms of biological role, one of the primary rRNA binding proteins, it binds directly to 16S rRNA where it nucleates assembly of the body of the 30S subunit. Its function is as follows. With S5 and S12 plays an important role in translational accuracy. This chain is Small ribosomal subunit protein uS4c (rps4), found in Gladiolus papilio (Goldblotch gladiolus).